Here is a 279-residue protein sequence, read N- to C-terminus: MAFQGTSRTLTQQSSAASSGDLQKILFSPDAIKKMATECDLGRHHWMRADNAISVRPLVPQVTSNNLLSFFKSGYDAGELRSKGYMSVPQVLCAVTRTVSTDAEGSLKIYLADLGDKELSPIDGQCVTLHNHELPALISFQPTYDCPMELVGNRHRCFAVVVERHGYIGYGGTTASVCSNWQAQFSSKNNNYTHAAAGKTLVLPYNRLAEHSKPSAVARLLKSQLNNVSSSRYLLPNVALNQNAAGHESEILNESPPFAIGSPSASRNNSFRSQVVNGL.

This sequence belongs to the cucumovirus movement protein family.

The protein resides in the host cell junction. It is found in the host plasmodesma. Transports viral genome to neighboring plant cells directly through plasmosdesmata, without any budding. The movement protein allows efficient cell to cell propagation, by bypassing the host cell wall barrier. Acts by forming a tubular structure at the host plasmodesmata, enlarging it enough to allow free passage of virion capsids. This chain is Movement protein, found in Cucumber mosaic virus (strain Kin) (CMV).